Consider the following 285-residue polypeptide: Tropomyosin (285 aa).

Residues 1 to 273 (MDAIKKKMQA…KEKYREIGDD (273 aa)) adopt a coiled-coil conformation.

The protein belongs to the tropomyosin family. In terms of assembly, homodimer.

In terms of biological role, tropomyosin, in association with the troponin complex, plays a central role in the calcium dependent regulation of muscle contraction. This Chironomus kiiensis (Midge) protein is Tropomyosin.